The sequence spans 57 residues: NADH dehydrogenase [ubiquinone] 1 beta subcomplex subunit 1 (57 aa).

A helical membrane pass occupies residues 10-26 (HWVHILVPAGFVFGCYL).

Belongs to the complex I NDUFB1 subunit family. In terms of assembly, complex I is composed of 45 different subunits.

The protein localises to the mitochondrion inner membrane. In terms of biological role, accessory subunit of the mitochondrial membrane respiratory chain NADH dehydrogenase (Complex I) that is believed not to be involved in catalysis. Complex I functions in the transfer of electrons from NADH to the respiratory chain. The immediate electron acceptor for the enzyme is believed to be ubiquinone. The protein is NADH dehydrogenase [ubiquinone] 1 beta subcomplex subunit 1 (Ndufb1) of Mus musculus (Mouse).